A 324-amino-acid polypeptide reads, in one-letter code: 4-hydroxy-3-methylbut-2-enyl diphosphate reductase (324 aa).

A [4Fe-4S] cluster-binding site is contributed by Cys13. Positions 41 and 75 each coordinate (2E)-4-hydroxy-3-methylbut-2-enyl diphosphate. Dimethylallyl diphosphate-binding residues include His41 and His75. Isopentenyl diphosphate is bound by residues His41 and His75. Cys97 provides a ligand contact to [4Fe-4S] cluster. His125 is a binding site for (2E)-4-hydroxy-3-methylbut-2-enyl diphosphate. Residue His125 participates in dimethylallyl diphosphate binding. Residue His125 coordinates isopentenyl diphosphate. Catalysis depends on Glu127, which acts as the Proton donor. Thr168 serves as a coordination point for (2E)-4-hydroxy-3-methylbut-2-enyl diphosphate. Residue Cys225 coordinates [4Fe-4S] cluster. (2E)-4-hydroxy-3-methylbut-2-enyl diphosphate is bound by residues Ser253, Ser254, Asn255, and Ser302. Residues Ser253, Ser254, Asn255, and Ser302 each coordinate dimethylallyl diphosphate. The isopentenyl diphosphate site is built by Ser253, Ser254, Asn255, and Ser302.

Belongs to the IspH family. The cofactor is [4Fe-4S] cluster.

It catalyses the reaction isopentenyl diphosphate + 2 oxidized [2Fe-2S]-[ferredoxin] + H2O = (2E)-4-hydroxy-3-methylbut-2-enyl diphosphate + 2 reduced [2Fe-2S]-[ferredoxin] + 2 H(+). The enzyme catalyses dimethylallyl diphosphate + 2 oxidized [2Fe-2S]-[ferredoxin] + H2O = (2E)-4-hydroxy-3-methylbut-2-enyl diphosphate + 2 reduced [2Fe-2S]-[ferredoxin] + 2 H(+). Its pathway is isoprenoid biosynthesis; dimethylallyl diphosphate biosynthesis; dimethylallyl diphosphate from (2E)-4-hydroxy-3-methylbutenyl diphosphate: step 1/1. It functions in the pathway isoprenoid biosynthesis; isopentenyl diphosphate biosynthesis via DXP pathway; isopentenyl diphosphate from 1-deoxy-D-xylulose 5-phosphate: step 6/6. Catalyzes the conversion of 1-hydroxy-2-methyl-2-(E)-butenyl 4-diphosphate (HMBPP) into a mixture of isopentenyl diphosphate (IPP) and dimethylallyl diphosphate (DMAPP). Acts in the terminal step of the DOXP/MEP pathway for isoprenoid precursor biosynthesis. The sequence is that of 4-hydroxy-3-methylbut-2-enyl diphosphate reductase from Chlorobium limicola (strain DSM 245 / NBRC 103803 / 6330).